We begin with the raw amino-acid sequence, 144 residues long: Large ribosomal subunit protein uL15 (144 aa).

A disordered region spans residues 1–56 (MELNNLKPAAGAKHAKRRVGRGIGSGLGKTAGRGHKGQKSRSGGFHKVGFEGGQMP). Over residues 21 to 31 (RGIGSGLGKTA) the composition is skewed to gly residues.

Belongs to the universal ribosomal protein uL15 family. Part of the 50S ribosomal subunit.

In terms of biological role, binds to the 23S rRNA. This is Large ribosomal subunit protein uL15 from Burkholderia ambifaria (strain MC40-6).